The chain runs to 127 residues: Small ribosomal subunit protein uS12 (127 aa).

Position 89 is a 3-methylthioaspartic acid (Asp89).

This sequence belongs to the universal ribosomal protein uS12 family. Part of the 30S ribosomal subunit. Contacts proteins S8 and S17. May interact with IF1 in the 30S initiation complex.

Its function is as follows. With S4 and S5 plays an important role in translational accuracy. Interacts with and stabilizes bases of the 16S rRNA that are involved in tRNA selection in the A site and with the mRNA backbone. Located at the interface of the 30S and 50S subunits, it traverses the body of the 30S subunit contacting proteins on the other side and probably holding the rRNA structure together. The combined cluster of proteins S8, S12 and S17 appears to hold together the shoulder and platform of the 30S subunit. In Campylobacter lari (strain RM2100 / D67 / ATCC BAA-1060), this protein is Small ribosomal subunit protein uS12.